Reading from the N-terminus, the 703-residue chain is Phenylalanine aminomutase (L-beta-phenylalanine forming) (703 aa).

Catalysis depends on Tyr79, which acts as the Proton donor/acceptor. The 5-imidazolinone (Ala-Gly) cross-link spans 177 to 179 (ASG). At Ser178 the chain carries 2,3-didehydroalanine (Ser).

Belongs to the PAL/histidase family. Post-translationally, contains an active site 4-methylidene-imidazol-5-one (MIO), which is formed autocatalytically by cyclization and dehydration of residues Ala-Ser-Gly.

The catalysed reaction is L-phenylalanine = L-beta-phenylalanine. The protein operates within mycotoxin biosynthesis. Phenylalanine aminomutase; part of the gene cluster that mediates the biosynthesis of the mycotoxin cyclochlorotine, a hepatotoxic and carcinogenic cyclic chlorinated pentapeptide. Within the pathway, cctP1 provides the uncommon building block beta-Phe from Phe. The NRPS cctN initially catalyzes the condensation of L-serine (Ser), Pro, L-2-aminobutyrate (2Abu), Ser, and beta-Phe in this order to produce isocyclotine. After the dichlorination of Pro2 catalyzed by cctP2 to produce isocyclochlorotine, the cctO-mediated transacylation of isocyclochlorotine can furnish cyclochlorotine. The subsequent hydroxylation of cyclochlorotine by cctR yields hydroxycyclochlorotine as the final product. CctP1 probably acts as a phenylalanine aminomutase and provides the uncommon building block beta-Phe. Furthermore, 2Abu can be synthesized from threonine by one of the threonine dehydratases and transaminases localized outside of the cluster. The functions of the remaining proteins encoded by the cluster, cctM and cctT, have not been identified yet. In Talaromyces islandicus (Penicillium islandicum), this protein is Phenylalanine aminomutase (L-beta-phenylalanine forming).